We begin with the raw amino-acid sequence, 496 residues long: Glycerol kinase (496 aa).

An ADP-binding site is contributed by Thr11. The ATP site is built by Thr11, Ser12, and Ser13. Sn-glycerol 3-phosphate is bound at residue Thr11. ADP is bound at residue Arg15. Positions 81, 82, 133, and 242 each coordinate sn-glycerol 3-phosphate. 5 residues coordinate glycerol: Arg81, Glu82, Tyr133, Asp242, and Gln243. ADP contacts are provided by Thr264 and Gly307. ATP is bound by residues Thr264, Gly307, Gln311, and Gly412. Residues Gly412 and Asn416 each contribute to the ADP site.

Belongs to the FGGY kinase family.

The catalysed reaction is glycerol + ATP = sn-glycerol 3-phosphate + ADP + H(+). It functions in the pathway polyol metabolism; glycerol degradation via glycerol kinase pathway; sn-glycerol 3-phosphate from glycerol: step 1/1. Its activity is regulated as follows. Inhibited by fructose 1,6-bisphosphate (FBP). Functionally, key enzyme in the regulation of glycerol uptake and metabolism. Catalyzes the phosphorylation of glycerol to yield sn-glycerol 3-phosphate. The sequence is that of Glycerol kinase from Albidiferax ferrireducens (strain ATCC BAA-621 / DSM 15236 / T118) (Rhodoferax ferrireducens).